The primary structure comprises 654 residues: Kelch-like protein 13 (654 aa).

Residues 91–160 (CDVTLMPGDT…IYTAKLSLNM (70 aa)) form the BTB domain. Residues 195–296 (CVEVGRIANT…TPQELINYVQ (102 aa)) form the BACK domain. 6 Kelch repeats span residues 340–388 (RLVT…VIGN), 389–440 (FLYV…ALKG), 441–487 (FLYA…VYGG), 489–534 (MYIS…TVGD), 536–586 (LYVI…VFEN), and 587–635 (KIYV…TLTV).

In terms of assembly, component of the BCR(KLHL9-KLHL13) E3 ubiquitin ligase complex, at least composed of CUL3, KLHL9, KLHL13 and RBX1. Interacts with AURKB.

It functions in the pathway protein modification; protein ubiquitination. Its function is as follows. Substrate-specific adapter of a BCR (BTB-CUL3-RBX1) E3 ubiquitin-protein ligase complex required for mitotic progression and cytokinesis. The BCR(KLHL9-KLHL13) E3 ubiquitin ligase complex mediates the ubiquitination of AURKB and controls the dynamic behavior of AURKB on mitotic chromosomes and thereby coordinates faithful mitotic progression and completion of cytokinesis. The chain is Kelch-like protein 13 (Klhl13) from Mus musculus (Mouse).